The sequence spans 332 residues: NADH-quinone oxidoreductase subunit H (332 aa).

9 consecutive transmembrane segments (helical) span residues 4-24 (FAFF…IFAS), 44-64 (IGPD…MIKL), 78-98 (FIFA…LAAI), 120-140 (VALL…FLGG), 165-185 (VGAL…LVDI), 194-214 (FSWL…ALFI), 255-275 (IAGA…FWII), 279-299 (IMMI…RAAF), and 312-332 (YLIL…TVLL).

The protein belongs to the complex I subunit 1 family. NDH-1 is composed of 14 different subunits. Subunits NuoA, H, J, K, L, M, N constitute the membrane sector of the complex.

The protein localises to the cell inner membrane. The catalysed reaction is a quinone + NADH + 5 H(+)(in) = a quinol + NAD(+) + 4 H(+)(out). Its function is as follows. NDH-1 shuttles electrons from NADH, via FMN and iron-sulfur (Fe-S) centers, to quinones in the respiratory chain. The immediate electron acceptor for the enzyme in this species is believed to be ubiquinone. Couples the redox reaction to proton translocation (for every two electrons transferred, four hydrogen ions are translocated across the cytoplasmic membrane), and thus conserves the redox energy in a proton gradient. This subunit may bind ubiquinone. The sequence is that of NADH-quinone oxidoreductase subunit H from Campylobacter jejuni subsp. jejuni serotype O:2 (strain ATCC 700819 / NCTC 11168).